Consider the following 217-residue polypeptide: Probable septum site-determining protein MinC (217 aa).

This sequence belongs to the MinC family. As to quaternary structure, interacts with MinD and FtsZ.

Cell division inhibitor that blocks the formation of polar Z ring septums. Rapidly oscillates between the poles of the cell to destabilize FtsZ filaments that have formed before they mature into polar Z rings. Prevents FtsZ polymerization. The polypeptide is Probable septum site-determining protein MinC (Pelotomaculum thermopropionicum (strain DSM 13744 / JCM 10971 / SI)).